Here is a 191-residue protein sequence, read N- to C-terminus: Xanthine phosphoribosyltransferase (191 aa).

Xanthine contacts are provided by Leu-20 and Asn-27. Ala-128 to Ala-132 is a binding site for 5-phospho-alpha-D-ribose 1-diphosphate. Xanthine is bound at residue Lys-156.

Belongs to the purine/pyrimidine phosphoribosyltransferase family. Xpt subfamily. As to quaternary structure, homodimer.

Its subcellular location is the cytoplasm. It carries out the reaction XMP + diphosphate = xanthine + 5-phospho-alpha-D-ribose 1-diphosphate. Its pathway is purine metabolism; XMP biosynthesis via salvage pathway; XMP from xanthine: step 1/1. In terms of biological role, converts the preformed base xanthine, a product of nucleic acid breakdown, to xanthosine 5'-monophosphate (XMP), so it can be reused for RNA or DNA synthesis. The chain is Xanthine phosphoribosyltransferase from Acinetobacter baylyi (strain ATCC 33305 / BD413 / ADP1).